We begin with the raw amino-acid sequence, 334 residues long: MIEADRLIQPQLQGQDDVIDRAMRPKLLDEYTGQDDTRAQLKVFIQAAKNREEALDHMLIYGPPGLGKTTLAMIVANEMGVNIKSTSGPVLEKAGDLAALLTNLEAGDVLFIDEIHRLSPVVEEILYPAMEDYQLDIMIGEGPAARSIKLDLPPFTLVGATTRAGALTSPLRARFGIPLRLEFYNVKDLSTIVTRSAQVMGLAIDSEGATEIAKRSRGTPRIANRLLRRVRDYAEVQHDGAVTQNVAELALNLLDVDGEGFDYMDRKLLLAIIDKFMGGPVGLDNLAAAIGEERETIEDVLEPFLIQQGFIQRTPRGRIATARAYVHFGMIKPE.

The interval 4-184 is large ATPase domain (RuvB-L); it reads ADRLIQPQLQ…FGIPLRLEFY (181 aa). Residues arginine 24, glycine 65, lysine 68, threonine 69, threonine 70, 131–133, arginine 174, tyrosine 184, and arginine 221 contribute to the ATP site; that span reads EDY. Threonine 69 serves as a coordination point for Mg(2+). The interval 185 to 255 is small ATPAse domain (RuvB-S); sequence NVKDLSTIVT…VAELALNLLD (71 aa). The segment at 258 to 334 is head domain (RuvB-H); that stretch reads GEGFDYMDRK…YVHFGMIKPE (77 aa). 3 residues coordinate DNA: arginine 294, arginine 313, and arginine 318.

This sequence belongs to the RuvB family. In terms of assembly, homohexamer. Forms an RuvA(8)-RuvB(12)-Holliday junction (HJ) complex. HJ DNA is sandwiched between 2 RuvA tetramers; dsDNA enters through RuvA and exits via RuvB. An RuvB hexamer assembles on each DNA strand where it exits the tetramer. Each RuvB hexamer is contacted by two RuvA subunits (via domain III) on 2 adjacent RuvB subunits; this complex drives branch migration. In the full resolvosome a probable DNA-RuvA(4)-RuvB(12)-RuvC(2) complex forms which resolves the HJ.

Its subcellular location is the cytoplasm. It carries out the reaction ATP + H2O = ADP + phosphate + H(+). The RuvA-RuvB-RuvC complex processes Holliday junction (HJ) DNA during genetic recombination and DNA repair, while the RuvA-RuvB complex plays an important role in the rescue of blocked DNA replication forks via replication fork reversal (RFR). RuvA specifically binds to HJ cruciform DNA, conferring on it an open structure. The RuvB hexamer acts as an ATP-dependent pump, pulling dsDNA into and through the RuvAB complex. RuvB forms 2 homohexamers on either side of HJ DNA bound by 1 or 2 RuvA tetramers; 4 subunits per hexamer contact DNA at a time. Coordinated motions by a converter formed by DNA-disengaged RuvB subunits stimulates ATP hydrolysis and nucleotide exchange. Immobilization of the converter enables RuvB to convert the ATP-contained energy into a lever motion, pulling 2 nucleotides of DNA out of the RuvA tetramer per ATP hydrolyzed, thus driving DNA branch migration. The RuvB motors rotate together with the DNA substrate, which together with the progressing nucleotide cycle form the mechanistic basis for DNA recombination by continuous HJ branch migration. Branch migration allows RuvC to scan DNA until it finds its consensus sequence, where it cleaves and resolves cruciform DNA. The chain is Holliday junction branch migration complex subunit RuvB from Shewanella oneidensis (strain ATCC 700550 / JCM 31522 / CIP 106686 / LMG 19005 / NCIMB 14063 / MR-1).